Here is a 419-residue protein sequence, read N- to C-terminus: 3-isopropylmalate dehydratase large subunit (419 aa).

The [4Fe-4S] cluster site is built by cysteine 300, cysteine 360, and cysteine 363.

This sequence belongs to the aconitase/IPM isomerase family. LeuC type 2 subfamily. Heterodimer of LeuC and LeuD. [4Fe-4S] cluster is required as a cofactor.

It catalyses the reaction (2R,3S)-3-isopropylmalate = (2S)-2-isopropylmalate. It participates in amino-acid biosynthesis; L-leucine biosynthesis; L-leucine from 3-methyl-2-oxobutanoate: step 2/4. Its function is as follows. Catalyzes the isomerization between 2-isopropylmalate and 3-isopropylmalate, via the formation of 2-isopropylmaleate. This Nitratidesulfovibrio vulgaris (strain ATCC 29579 / DSM 644 / CCUG 34227 / NCIMB 8303 / VKM B-1760 / Hildenborough) (Desulfovibrio vulgaris) protein is 3-isopropylmalate dehydratase large subunit.